A 275-amino-acid polypeptide reads, in one-letter code: 4-hydroxy-tetrahydrodipicolinate reductase (275 aa).

NAD(+) is bound by residues 8–13 (GATGRM), 100–102 (GTT), and 126–129 (SPNM). Catalysis depends on His-160, which acts as the Proton donor/acceptor. Residue His-161 coordinates (S)-2,3,4,5-tetrahydrodipicolinate. Residue Lys-164 is the Proton donor of the active site. 170–171 (GT) is a (S)-2,3,4,5-tetrahydrodipicolinate binding site.

It belongs to the DapB family.

The protein resides in the cytoplasm. The catalysed reaction is (S)-2,3,4,5-tetrahydrodipicolinate + NAD(+) + H2O = (2S,4S)-4-hydroxy-2,3,4,5-tetrahydrodipicolinate + NADH + H(+). It catalyses the reaction (S)-2,3,4,5-tetrahydrodipicolinate + NADP(+) + H2O = (2S,4S)-4-hydroxy-2,3,4,5-tetrahydrodipicolinate + NADPH + H(+). It functions in the pathway amino-acid biosynthesis; L-lysine biosynthesis via DAP pathway; (S)-tetrahydrodipicolinate from L-aspartate: step 4/4. Functionally, catalyzes the conversion of 4-hydroxy-tetrahydrodipicolinate (HTPA) to tetrahydrodipicolinate. In Methanopyrus kandleri (strain AV19 / DSM 6324 / JCM 9639 / NBRC 100938), this protein is 4-hydroxy-tetrahydrodipicolinate reductase.